The following is a 610-amino-acid chain: Elongation factor 4 (610 aa).

The tr-type G domain occupies 11–193 (EKIRNFSIIA…QIVEKVPAPT (183 aa)). GTP is bound by residues 23-28 (DHGKST) and 140-143 (NKID).

This sequence belongs to the TRAFAC class translation factor GTPase superfamily. Classic translation factor GTPase family. LepA subfamily.

The protein resides in the cell membrane. The enzyme catalyses GTP + H2O = GDP + phosphate + H(+). Functionally, required for accurate and efficient protein synthesis under certain stress conditions. May act as a fidelity factor of the translation reaction, by catalyzing a one-codon backward translocation of tRNAs on improperly translocated ribosomes. Back-translocation proceeds from a post-translocation (POST) complex to a pre-translocation (PRE) complex, thus giving elongation factor G a second chance to translocate the tRNAs correctly. Binds to ribosomes in a GTP-dependent manner. This chain is Elongation factor 4, found in Streptococcus pyogenes serotype M2 (strain MGAS10270).